We begin with the raw amino-acid sequence, 67 residues long: ATP synthase F(0) complex subunit 8 (67 aa).

Residues Thr8–Leu24 traverse the membrane as a helical segment. Position 54 is an N6-acetyllysine; alternate (Lys54). Position 54 is an N6-succinyllysine; alternate (Lys54). Lys57 is modified (N6-acetyllysine).

The protein belongs to the ATPase protein 8 family. Component of the ATP synthase complex composed at least of ATP5F1A/subunit alpha, ATP5F1B/subunit beta, ATP5MC1/subunit c (homooctomer), MT-ATP6/subunit a, MT-ATP8/subunit 8, ATP5ME/subunit e, ATP5MF/subunit f, ATP5MG/subunit g, ATP5MK/subunit k, ATP5MJ/subunit j, ATP5F1C/subunit gamma, ATP5F1D/subunit delta, ATP5F1E/subunit epsilon, ATP5PF/subunit F6, ATP5PB/subunit b, ATP5PD/subunit d, ATP5PO/subunit OSCP. ATP synthase complex consists of a soluble F(1) head domain (subunits alpha(3) and beta(3)) - the catalytic core - and a membrane F(0) domain - the membrane proton channel (subunits c, a, 8, e, f, g, k and j). These two domains are linked by a central stalk (subunits gamma, delta, and epsilon) rotating inside the F1 region and a stationary peripheral stalk (subunits F6, b, d, and OSCP). Interacts with PRICKLE3.

Its subcellular location is the mitochondrion membrane. Subunit 8, of the mitochondrial membrane ATP synthase complex (F(1)F(0) ATP synthase or Complex V) that produces ATP from ADP in the presence of a proton gradient across the membrane which is generated by electron transport complexes of the respiratory chain. ATP synthase complex consist of a soluble F(1) head domain - the catalytic core - and a membrane F(1) domain - the membrane proton channel. These two domains are linked by a central stalk rotating inside the F(1) region and a stationary peripheral stalk. During catalysis, ATP synthesis in the catalytic domain of F(1) is coupled via a rotary mechanism of the central stalk subunits to proton translocation. In vivo, can only synthesize ATP although its ATP hydrolase activity can be activated artificially in vitro. Part of the complex F(0) domain. The sequence is that of ATP synthase F(0) complex subunit 8 from Glis glis (Fat dormouse).